A 662-amino-acid chain; its full sequence is Methyl-accepting chemotaxis protein McpB (662 aa).

Residues 1 to 16 (MKTFINWLKKPSISKK) are Cytoplasmic-facing. The chain crosses the membrane as a helical span at residues 17–37 (LIVSFIAILIIPILILEFSSY). Over 38 to 282 (RSASGKLDQE…IKDASKSVLT (245 aa)) the chain is Extracellular. One can recognise a Cache domain in the interval 153–229 (VTDPYVAASD…KAGEKLSGDW (77 aa)). A helical transmembrane segment spans residues 283 to 303 (TGMIVLIASIVAGGILILFIV). Residues 304-356 (RSITKPLKRLVQSSKTISRGDLTETIEIHSKDELGELGESFNEMGQSLRSLIS) enclose the HAMP domain. The Cytoplasmic segment spans residues 304–662 (RSITKPLKRL…RDLTKQFKIE (359 aa)). A glutamate methyl ester (Gln) mark is found at Q371 and Q595. The region spanning 375–611 (SAGQTSKATE…HVSAAVSGIA (237 aa)) is the Methyl-accepting transducer domain. A glutamate methyl ester (Glu) mark is found at E630 and E637.

Belongs to the methyl-accepting chemotaxis (MCP) protein family. In terms of assembly, interacts with FloT. In terms of processing, some glutamine residues are deamidated to glutamate by CheD and subsequently methylated. Post-translationally, the demethylation is selective. Gln-371 is demethylated only upon asparagine addition whereas Glu-637 is demethylated only upon asparagine removal. Glu-630 appears indiscriminate and is demethylated upon both addition and removal of asparagine.

It localises to the cell membrane. The protein resides in the membrane raft. Chemotactic-signal transducers respond to changes in the concentration of attractants and repellents in the environment, transduce a signal from the outside to the inside of the cell, and facilitate sensory adaptation through the variation of the level of methylation. All amino acids serve as attractants in B.subtilis, they appear to cause an increase in the turnover methyl groups, leading to methylation of an unidentified acceptor, while repellents have been shown to cause a decrease in methyl group turnover. The methyl groups are added by a methyltransferase and removed by a methylesterase. McpB is required for taxis towards asparagine, aspartate, glutamine, and histidine. In Bacillus subtilis (strain 168), this protein is Methyl-accepting chemotaxis protein McpB (mcpB).